The chain runs to 327 residues: Delta-aminolevulinic acid dehydratase (327 aa).

Residues Cys-119, Cys-121, and Cys-129 each contribute to the Zn(2+) site. Residue Lys-198 is the Schiff-base intermediate with substrate of the active site. 5-aminolevulinate-binding residues include Arg-208 and Arg-220. Residue Glu-236 participates in Mg(2+) binding. Lys-251 serves as the catalytic Schiff-base intermediate with substrate. Ser-277 and Tyr-316 together coordinate 5-aminolevulinate.

It belongs to the ALAD family. In terms of assembly, homooctamer. Requires Zn(2+) as cofactor.

The catalysed reaction is 2 5-aminolevulinate = porphobilinogen + 2 H2O + H(+). The protein operates within porphyrin-containing compound metabolism; protoporphyrin-IX biosynthesis; coproporphyrinogen-III from 5-aminolevulinate: step 1/4. Its function is as follows. Catalyzes an early step in the biosynthesis of tetrapyrroles. Binds two molecules of 5-aminolevulinate per subunit, each at a distinct site, and catalyzes their condensation to form porphobilinogen. This Synechocystis sp. (strain ATCC 27184 / PCC 6803 / Kazusa) protein is Delta-aminolevulinic acid dehydratase (hemB).